The chain runs to 248 residues: Pyridoxine 5'-phosphate synthase (248 aa).

N12 is a binding site for 3-amino-2-oxopropyl phosphate. 14 to 15 (DH) is a binding site for 1-deoxy-D-xylulose 5-phosphate. A 3-amino-2-oxopropyl phosphate-binding site is contributed by R23. Catalysis depends on H48, which acts as the Proton acceptor. The 1-deoxy-D-xylulose 5-phosphate site is built by R50 and H55. The active-site Proton acceptor is E75. Residue T105 participates in 1-deoxy-D-xylulose 5-phosphate binding. H196 functions as the Proton donor in the catalytic mechanism. Residues G197 and 218–219 (GH) contribute to the 3-amino-2-oxopropyl phosphate site.

This sequence belongs to the PNP synthase family. As to quaternary structure, homooctamer; tetramer of dimers.

It localises to the cytoplasm. The enzyme catalyses 3-amino-2-oxopropyl phosphate + 1-deoxy-D-xylulose 5-phosphate = pyridoxine 5'-phosphate + phosphate + 2 H2O + H(+). It functions in the pathway cofactor biosynthesis; pyridoxine 5'-phosphate biosynthesis; pyridoxine 5'-phosphate from D-erythrose 4-phosphate: step 5/5. Catalyzes the complicated ring closure reaction between the two acyclic compounds 1-deoxy-D-xylulose-5-phosphate (DXP) and 3-amino-2-oxopropyl phosphate (1-amino-acetone-3-phosphate or AAP) to form pyridoxine 5'-phosphate (PNP) and inorganic phosphate. This is Pyridoxine 5'-phosphate synthase from Pseudomonas aeruginosa (strain LESB58).